The primary structure comprises 198 residues: Holliday junction branch migration complex subunit RuvA (198 aa).

Residues 1-63 (MYSYIIGVIT…EDASILYGFS (63 aa)) are domain I. The interval 64–142 (SQKERELFNL…KDFVPSEKPV (79 aa)) is domain II. A flexible linker region spans residues 143–153 (NKEVKRSNDSE). A domain III region spans residues 153 to 198 (EFAREALLQLGYFKNDVDAFIENTDISGLSIEDIMKKAMKSLDSSR).

It belongs to the RuvA family. Homotetramer. Forms an RuvA(8)-RuvB(12)-Holliday junction (HJ) complex. HJ DNA is sandwiched between 2 RuvA tetramers; dsDNA enters through RuvA and exits via RuvB. An RuvB hexamer assembles on each DNA strand where it exits the tetramer. Each RuvB hexamer is contacted by two RuvA subunits (via domain III) on 2 adjacent RuvB subunits; this complex drives branch migration. In the full resolvosome a probable DNA-RuvA(4)-RuvB(12)-RuvC(2) complex forms which resolves the HJ.

The protein resides in the cytoplasm. Its function is as follows. The RuvA-RuvB-RuvC complex processes Holliday junction (HJ) DNA during genetic recombination and DNA repair, while the RuvA-RuvB complex plays an important role in the rescue of blocked DNA replication forks via replication fork reversal (RFR). RuvA specifically binds to HJ cruciform DNA, conferring on it an open structure. The RuvB hexamer acts as an ATP-dependent pump, pulling dsDNA into and through the RuvAB complex. HJ branch migration allows RuvC to scan DNA until it finds its consensus sequence, where it cleaves and resolves the cruciform DNA. This is Holliday junction branch migration complex subunit RuvA from Finegoldia magna (strain ATCC 29328 / DSM 20472 / WAL 2508) (Peptostreptococcus magnus).